A 234-amino-acid polypeptide reads, in one-letter code: uncharacterized protein (234 aa).

This is an uncharacterized protein from Acheta domesticus (House cricket).